Consider the following 101-residue polypeptide: Putative regulatory protein PrgT (101 aa).

In terms of biological role, might be involved in the expression of prgA, but is not required for activation of the expression of prgB. The polypeptide is Putative regulatory protein PrgT (prgT) (Enterococcus faecalis (strain ATCC 47077 / OG1RF)).